The sequence spans 364 residues: D-alanine--D-alanine ligase (364 aa).

Positions 146-352 (KLCAMNAGIA…FAELVEKLLL (207 aa)) constitute an ATP-grasp domain. 179–234 (TKRFDWPLFVKPASLGSSVGISKVRNAEELAAALENACGLDSKALVEAAISGREIE) is a binding site for ATP. Mg(2+)-binding residues include Asp305, Glu319, and Asn321.

Belongs to the D-alanine--D-alanine ligase family. Mg(2+) serves as cofactor. The cofactor is Mn(2+).

The protein localises to the cytoplasm. The catalysed reaction is 2 D-alanine + ATP = D-alanyl-D-alanine + ADP + phosphate + H(+). Its pathway is cell wall biogenesis; peptidoglycan biosynthesis. Functionally, cell wall formation. The sequence is that of D-alanine--D-alanine ligase from Chlorobaculum tepidum (strain ATCC 49652 / DSM 12025 / NBRC 103806 / TLS) (Chlorobium tepidum).